A 279-amino-acid chain; its full sequence is Acyl-coenzyme A thioesterase MBLAC2 (279 aa).

Residue Ser2 is modified to N-acetylserine. Zn(2+) is bound by residues His83, His85, Asp87, His88, His170, Asp189, and His231. A lipid anchor (S-palmitoyl cysteine) is attached at Cys254.

The protein belongs to the metallo-beta-lactamase superfamily. Glyoxalase II family. Zn(2+) serves as cofactor. In terms of processing, palmitoylated on Cys-254 by ZDHHC20.

It localises to the endoplasmic reticulum membrane. Its subcellular location is the cell membrane. It carries out the reaction hexadecanoyl-CoA + H2O = hexadecanoate + CoA + H(+). The catalysed reaction is dodecanoyl-CoA + H2O = dodecanoate + CoA + H(+). It catalyses the reaction tetradecanoyl-CoA + H2O = tetradecanoate + CoA + H(+). The enzyme catalyses octadecanoyl-CoA + H2O = octadecanoate + CoA + H(+). It carries out the reaction a beta-lactam + H2O = a substituted beta-amino acid. Acyl-CoA thioesterases are a group of enzymes that catalyze the hydrolysis of acyl-CoAs to the free fatty acid and coenzyme A (CoASH), providing the potential to regulate intracellular levels of acyl-CoAs, free fatty acids and CoASH. Has an acyl-CoA thioesterase activity towards the long chain fatty acyl-CoA thioester palmitoyl-CoA (hexadecanoyl-CoA; C16:0-CoA). Displays a substrate preference for fatty acyl-CoAs with chain-lengths C12-C18. The protein is Acyl-coenzyme A thioesterase MBLAC2 (MBLAC2) of Bos taurus (Bovine).